A 358-amino-acid polypeptide reads, in one-letter code: Malate dehydrogenase 2, glyoxysomal (358 aa).

The transit peptide at 1-38 (MEFRGDANKRIAMISAHLQPSFTPQMEAKNSVMGRENC) directs the protein to the glyoxysome. NAD(+)-binding positions include 53–59 (GAAGGIG) and aspartate 79. Substrate contacts are provided by arginine 126 and arginine 132. Residues asparagine 139 and 162 to 164 (ISN) contribute to the NAD(+) site. Substrate contacts are provided by asparagine 164 and arginine 198. Histidine 222 serves as the catalytic Proton acceptor. Residue methionine 273 coordinates NAD(+).

This sequence belongs to the LDH/MDH superfamily. MDH type 1 family. As to quaternary structure, homodimer.

The protein resides in the glyoxysome. The enzyme catalyses (S)-malate + NAD(+) = oxaloacetate + NADH + H(+). The sequence is that of Malate dehydrogenase 2, glyoxysomal (MDH2) from Brassica napus (Rape).